The chain runs to 242 residues: Probable transcriptional regulatory protein BTH_I1015 (242 aa).

Belongs to the TACO1 family.

It is found in the cytoplasm. The chain is Probable transcriptional regulatory protein BTH_I1015 from Burkholderia thailandensis (strain ATCC 700388 / DSM 13276 / CCUG 48851 / CIP 106301 / E264).